The following is a 292-amino-acid chain: Formamidopyrimidine-DNA glycosylase (292 aa).

The active-site Schiff-base intermediate with DNA is the P2. Catalysis depends on E3, which acts as the Proton donor. The Proton donor; for beta-elimination activity role is filled by K60. DNA is bound by residues H109, R128, and K173. The FPG-type zinc-finger motif lies at 258–292; that stretch reads NVYRRTGKKCRQCKNLIERQKISGRSTHWCRKCQK. The active-site Proton donor; for delta-elimination activity is R282.

This sequence belongs to the FPG family. As to quaternary structure, monomer. Requires Zn(2+) as cofactor.

It carries out the reaction Hydrolysis of DNA containing ring-opened 7-methylguanine residues, releasing 2,6-diamino-4-hydroxy-5-(N-methyl)formamidopyrimidine.. It catalyses the reaction 2'-deoxyribonucleotide-(2'-deoxyribose 5'-phosphate)-2'-deoxyribonucleotide-DNA = a 3'-end 2'-deoxyribonucleotide-(2,3-dehydro-2,3-deoxyribose 5'-phosphate)-DNA + a 5'-end 5'-phospho-2'-deoxyribonucleoside-DNA + H(+). Involved in base excision repair of DNA damaged by oxidation or by mutagenic agents. Acts as a DNA glycosylase that recognizes and removes damaged bases. Has a preference for oxidized purines, such as 7,8-dihydro-8-oxoguanine (8-oxoG). Has AP (apurinic/apyrimidinic) lyase activity and introduces nicks in the DNA strand. Cleaves the DNA backbone by beta-delta elimination to generate a single-strand break at the site of the removed base with both 3'- and 5'-phosphates. This Prochlorococcus marinus subsp. pastoris (strain CCMP1986 / NIES-2087 / MED4) protein is Formamidopyrimidine-DNA glycosylase.